A 160-amino-acid polypeptide reads, in one-letter code: Cytochrome b6-f complex subunit 4 (160 aa).

The next 3 membrane-spanning stretches (helical) occupy residues 36–56, 95–115, and 131–151; these read LLYI…GLSV, LLGV…PFIE, and TLFL…TLPI.

Belongs to the cytochrome b family. PetD subfamily. As to quaternary structure, the 4 large subunits of the cytochrome b6-f complex are cytochrome b6, subunit IV (17 kDa polypeptide, petD), cytochrome f and the Rieske protein, while the 4 small subunits are petG, petL, petM and petN. The complex functions as a dimer.

Its subcellular location is the plastid. It is found in the chloroplast thylakoid membrane. Component of the cytochrome b6-f complex, which mediates electron transfer between photosystem II (PSII) and photosystem I (PSI), cyclic electron flow around PSI, and state transitions. The sequence is that of Cytochrome b6-f complex subunit 4 from Tetradesmus obliquus (Green alga).